Reading from the N-terminus, the 119-residue chain is Large ribosomal subunit protein bL19 (119 aa).

It belongs to the bacterial ribosomal protein bL19 family.

Functionally, this protein is located at the 30S-50S ribosomal subunit interface and may play a role in the structure and function of the aminoacyl-tRNA binding site. The polypeptide is Large ribosomal subunit protein bL19 (Petrotoga mobilis (strain DSM 10674 / SJ95)).